Consider the following 110-residue polypeptide: Protein mistic (110 aa).

The Cytoplasmic segment spans residues 1–7; sequence MFCTFFE. The chain crosses the membrane as a helical span at residues 8–22; the sequence is KHHRKWDILLEKSTG. Residues 23 to 31 are Extracellular-facing; the sequence is VMEAMKVTS. Residues 32–55 traverse the membrane as a helical segment; sequence EEKEQLSTAIDRMNEGLDAFIQLY. Topologically, residues 56-66 are cytoplasmic; it reads NESEIDEPLIQ. The chain crosses the membrane as a helical span at residues 67 to 81; sequence LDDDTAELMKQARDM. Residues 82–88 lie on the Extracellular side of the membrane; it reads YGQEKLN. The helical transmembrane segment at 89-102 threads the bilayer; it reads EKLNTIIKQILSIS. The Cytoplasmic segment spans residues 103–110; that stretch reads VSEEGEKE.

As to quaternary structure, monomer.

The protein resides in the cell membrane. In terms of biological role, chaperone that facilitates the production and integration of integral membrane proteins into the bacterial lipid bilayer. This is Protein mistic (mstX) from Bacillus subtilis (strain 168).